We begin with the raw amino-acid sequence, 342 residues long: Ferredoxin--NADP reductase (342 aa).

Residues Cys-17, Asp-36, Gln-44, Tyr-49, Val-89, Phe-124, Asp-289, and Thr-330 each coordinate FAD.

The protein belongs to the ferredoxin--NADP reductase type 2 family. In terms of assembly, homodimer. FAD is required as a cofactor.

It catalyses the reaction 2 reduced [2Fe-2S]-[ferredoxin] + NADP(+) + H(+) = 2 oxidized [2Fe-2S]-[ferredoxin] + NADPH. The polypeptide is Ferredoxin--NADP reductase (Rhodopseudomonas palustris (strain ATCC BAA-98 / CGA009)).